Here is a 156-residue protein sequence, read N- to C-terminus: ATP synthase subunit b (156 aa).

A helical transmembrane segment spans residues 3-23; that stretch reads INFTLLAQALAFAGLIWIIAT.

Belongs to the ATPase B chain family. F-type ATPases have 2 components, F(1) - the catalytic core - and F(0) - the membrane proton channel. F(1) has five subunits: alpha(3), beta(3), gamma(1), delta(1), epsilon(1). F(0) has three main subunits: a(1), b(2) and c(10-14). The alpha and beta chains form an alternating ring which encloses part of the gamma chain. F(1) is attached to F(0) by a central stalk formed by the gamma and epsilon chains, while a peripheral stalk is formed by the delta and b chains.

The protein localises to the cell inner membrane. F(1)F(0) ATP synthase produces ATP from ADP in the presence of a proton or sodium gradient. F-type ATPases consist of two structural domains, F(1) containing the extramembraneous catalytic core and F(0) containing the membrane proton channel, linked together by a central stalk and a peripheral stalk. During catalysis, ATP synthesis in the catalytic domain of F(1) is coupled via a rotary mechanism of the central stalk subunits to proton translocation. Functionally, component of the F(0) channel, it forms part of the peripheral stalk, linking F(1) to F(0). The polypeptide is ATP synthase subunit b (Stenotrophomonas maltophilia (strain R551-3)).